The sequence spans 347 residues: Spermidine/putrescine import ATP-binding protein PotA (347 aa).

The 233-residue stretch at 6–238 (LEIKNLSHYY…PKTKFVADFI (233 aa)) folds into the ABC transporter domain. An ATP-binding site is contributed by 40-47 (GPSGCGKT).

Belongs to the ABC transporter superfamily. Spermidine/putrescine importer (TC 3.A.1.11.1) family. As to quaternary structure, the complex is composed of two ATP-binding proteins (PotA), two transmembrane proteins (PotB and PotC) and a solute-binding protein (PotD).

It is found in the cell inner membrane. The enzyme catalyses ATP + H2O + polyamine-[polyamine-binding protein]Side 1 = ADP + phosphate + polyamineSide 2 + [polyamine-binding protein]Side 1.. Part of the ABC transporter complex PotABCD involved in spermidine/putrescine import. Responsible for energy coupling to the transport system. The polypeptide is Spermidine/putrescine import ATP-binding protein PotA (Borreliella afzelii (strain PKo) (Borrelia afzelii)).